We begin with the raw amino-acid sequence, 311 residues long: HPr kinase/phosphorylase (311 aa).

Residues His-138 and Lys-159 contribute to the active site. 153–160 is an ATP binding site; the sequence is GKSGVGKS. Ser-160 contacts Mg(2+). Residue Asp-177 is the Proton acceptor; for phosphorylation activity. Proton donor; for dephosphorylation activity of the active site. Residues 201–210 form an important for the catalytic mechanism of both phosphorylation and dephosphorylation region; sequence LEIRGLGIIN. Glu-202 contributes to the Mg(2+) binding site. The active site involves Arg-243. Positions 264–269 are important for the catalytic mechanism of dephosphorylation; that stretch reads PVRPGR.

It belongs to the HPrK/P family. As to quaternary structure, homohexamer. It depends on Mg(2+) as a cofactor.

It catalyses the reaction [HPr protein]-L-serine + ATP = [HPr protein]-O-phospho-L-serine + ADP + H(+). The catalysed reaction is [HPr protein]-O-phospho-L-serine + phosphate + H(+) = [HPr protein]-L-serine + diphosphate. Functionally, catalyzes the ATP- as well as the pyrophosphate-dependent phosphorylation of a specific serine residue in HPr, a phosphocarrier protein of the phosphoenolpyruvate-dependent sugar phosphotransferase system (PTS). HprK/P also catalyzes the pyrophosphate-producing, inorganic phosphate-dependent dephosphorylation (phosphorolysis) of seryl-phosphorylated HPr (P-Ser-HPr). The two antagonistic activities of HprK/P are regulated by several intracellular metabolites, which change their concentration in response to the absence or presence of rapidly metabolisable carbon sources (glucose, fructose, etc.) in the growth medium. Also phosphorylates/dephosphorylates the HPr-like catabolite repression protein crh on a specific serine residue. Therefore, by controlling the phosphorylation state of HPr and crh, HPrK/P is a sensor enzyme that plays a major role in the regulation of carbon metabolism and sugar transport: it mediates carbon catabolite repression (CCR), and regulates PTS-catalyzed carbohydrate uptake and inducer exclusion. This chain is HPr kinase/phosphorylase, found in Geobacillus sp. (strain WCH70).